The chain runs to 1291 residues: GRB10-interacting GYF protein 2 (1291 aa).

Residue alanine 2 is modified to N-acetylalanine. Serine 19, serine 26, and serine 30 each carry phosphoserine. Omega-N-methylarginine is present on residues arginine 107, arginine 119, and arginine 121. The segment at 112 to 132 (GTVVGAPRGRSSSRGRGRGRG) is disordered. Serine 140 bears the Phosphoserine mark. 3 disordered regions span residues 148–196 (FGRG…RKHE), 209–248 (REEQ…GWRE), and 267–484 (RGYR…TEPD). Arginine 150 is subject to Omega-N-methylarginine. Positions 152-183 (GGREMHRSQSWEERGDRRFEKPGRKDVGRPNF) are enriched in basic and acidic residues. A phosphoserine mark is found at serine 161, serine 190, and serine 237. Residues 226 to 248 (SRRDGERWRPHSPDGPRSTGWRE) are compositionally biased toward basic and acidic residues. A DDX6 binding motif motif is present at residues 281–311 (DDRDSLPEWCLEDAEEEMGTFDSSGAFLSLK). The span at 290–299 (CLEDAEEEMG) shows a compositional bias: acidic residues. Residues 313-364 (VQKEPIPEEQEMDFRPVEEGEERSDSDSSHNEEAKEPDKTNRREGEKTDRAG) show a composition bias toward basic and acidic residues. A compositionally biased stretch (polar residues) spans 371–393 (VPQTSLSSARPGTPSDHQPQEAT). Threonine 383 is subject to Phosphothreonine. Positions 394 to 415 (QFERKDEPKAEQVEKAEEENRS) are enriched in basic and acidic residues. The 49-residue stretch at 534–582 (MQKWYYKDPQGEIQGPFNNQEMAEWFQAGYFTMSLLVKRACDESFQPLG) folds into the GYF domain. The interval 548–564 (GPFNNQEMAEWFQAGYF) is required for GRB10-binding. Phosphoserine is present on serine 594. Disordered stretches follow at residues 732–794 (KAKA…QEEA), 846–937 (EEAA…SNTA), 958–998 (ERQL…SKPA), 1011–1053 (EARQ…SVWG), and 1090–1118 (KEVG…NRQN). Residues 846-898 (EEAAKWAREEEEAQRRLEENRLRMEEEAARLRHEEEERKRKELELQRQKDLMR) are compositionally biased toward basic and acidic residues. The segment covering 899 to 924 (QRQQQQEALRRLQQQQQQQQLAQMKL) has biased composition (low complexity). Residues 925–937 (PSSSTWGQQSNTA) show a composition bias toward polar residues. The span at 958–973 (ERQLREEQRRQQRELM) shows a compositional bias: basic and acidic residues. A compositionally biased stretch (low complexity) spans 977–986 (QQQQQQQQQQ). Serine 995 is subject to Phosphoserine. Low complexity predominate over residues 1015 to 1031 (MQKQQQQQQQQQQQHQQ). The segment covering 1032–1053 (SNRARNSTHSNLHTSLGNSVWG) has biased composition (polar residues). Residues 1096–1110 (NSTNKNKNNASLSKS) show a composition bias toward low complexity. Lysine 1129 participates in a covalent cross-link: Glycyl lysine isopeptide (Lys-Gly) (interchain with G-Cter in SUMO2). Disordered stretches follow at residues 1202–1223 (AKQK…QDSV) and 1239–1263 (QSNN…KMVR). A compositionally biased stretch (low complexity) spans 1208 to 1220 (QQRQQQQQQQQQQ). Serine 1276 carries the phosphoserine modification.

This sequence belongs to the GIGYF family. As to quaternary structure, component of the 4EHP-GYF2 complex, at least composed of EIF4E2, GIGYF2 and ZNF598. Interacts (via the 4EHP-binding motif) with EIF4E2; the interaction is direct. Interacts with ZFP36/TTP (via P-P-P-P-G repeats); the interaction is direct. Interacts with GRB10. Interacts (via DDX6 motif) with DDX6 (via RecA-like domain 2). In terms of tissue distribution, expressed in heart, liver, kidney and brain as well as in testis.

Key component of the 4EHP-GYF2 complex, a multiprotein complex that acts as a repressor of translation initiation. In the 4EHP-GYF2 complex, acts as a factor that bridges EIF4E2 to ZFP36/TTP, linking translation repression with mRNA decay. Also recruits and bridges the association of the 4EHP complex with the decapping effector protein DDX6, which is required for the ZFP36/TTP-mediated down-regulation of AU-rich mRNA. May act cooperatively with GRB10 to regulate tyrosine kinase receptor signaling, including IGF1 and insulin receptors. In association with EIF4E2, assists ribosome-associated quality control (RQC) by sequestering the mRNA cap, blocking ribosome initiation and decreasing the translational load on problematic messages. Part of a pathway that works in parallel to RQC-mediated degradation of the stalled nascent polypeptide. GIGYF2 and EIF4E2 work downstream and independently of ZNF598, which seems to work as a scaffold that can recruit them to faulty mRNA even if alternative recruitment mechanisms may exist. The sequence is that of GRB10-interacting GYF protein 2 from Mus musculus (Mouse).